The chain runs to 179 residues: MEQFHATTIVCVRRGNHVALGGDGQVTLGNIVIKGTARKIRRLYHDKVLAGFAGATADAFTLQERFEAKLEKHQGHLMRAAVELTRDWRTDRVLRRLEAMLIVADTEHTLVLTGNGDVLEPEHGLAAIGSGGAYAQSAALALLRNTELPPEAIVKQSLEIAGDLCIYTNQNHVIETLGA.

The active site involves T7. The Na(+) site is built by G162, C165, and T168.

The protein belongs to the peptidase T1B family. HslV subfamily. A double ring-shaped homohexamer of HslV is capped on each side by a ring-shaped HslU homohexamer. The assembly of the HslU/HslV complex is dependent on binding of ATP.

The protein localises to the cytoplasm. It catalyses the reaction ATP-dependent cleavage of peptide bonds with broad specificity.. Its activity is regulated as follows. Allosterically activated by HslU binding. In terms of biological role, protease subunit of a proteasome-like degradation complex believed to be a general protein degrading machinery. The sequence is that of ATP-dependent protease subunit HslV from Bordetella bronchiseptica (strain ATCC BAA-588 / NCTC 13252 / RB50) (Alcaligenes bronchisepticus).